A 632-amino-acid chain; its full sequence is tRNA uridine 5-carboxymethylaminomethyl modification enzyme MnmG (632 aa).

13–18 (GGGHAG) is an FAD binding site. 273–287 (GPRYCPSIEDKIHRF) serves as a coordination point for NAD(+).

The protein belongs to the MnmG family. Homodimer. Heterotetramer of two MnmE and two MnmG subunits. FAD is required as a cofactor.

Its subcellular location is the cytoplasm. NAD-binding protein involved in the addition of a carboxymethylaminomethyl (cmnm) group at the wobble position (U34) of certain tRNAs, forming tRNA-cmnm(5)s(2)U34. The protein is tRNA uridine 5-carboxymethylaminomethyl modification enzyme MnmG of Psychrobacter cryohalolentis (strain ATCC BAA-1226 / DSM 17306 / VKM B-2378 / K5).